The following is a 422-amino-acid chain: MMMKLLFLIALFGCVVNSIRINNDNGLSFQSNCLGGSIQIAESIPLALNLQSNLSTHDAWMELITNAKKSIDMGIFYMTLTDGGQLDPVYGGQLGLDIYKALVDANSRGVSIRIVQNQPSSSMPDTDTQNLAKLGVQVRSINWPSLVGAGILHTKVIVVDQVSAYLGSANLDWRSLAQVKELGVLFQNCPSMVSDTEIAFQQYWDAAVVTELPSDWGVQYQAAYNQTNMASLLLNGNEKFEMFLAVSPPQFVSTDRTGDIDALVSAMNGATKTICISVMDYIPASLYNSPNTFWPVMDNALRAAAYNRGVQVRMLISHWNHTNYAIPQWLHSLDQVNNIDVRWFVVPDFPNEPQVPFTRVNHAKYMVTDEQSYVGTSNWSEDYYTNTGGLSYNIYNDEFTSQLQSIFDRDWNSPYSFPVTTY.

The signal sequence occupies residues 1–18; the sequence is MMMKLLFLIALFGCVVNS. A glycan (N-linked (GlcNAc...) asparagine) is linked at asparagine 53. A PLD phosphodiesterase 1 domain is found at 148–175; sequence GAGILHTKVIVVDQVSAYLGSANLDWRS. Residues histidine 153, lysine 155, and aspartate 160 contribute to the active site. 2 N-linked (GlcNAc...) asparagine glycosylation sites follow: asparagine 225 and asparagine 320. One can recognise a PLD phosphodiesterase 2 domain in the interval 357 to 383; sequence FTRVNHAKYMVTDEQSYVGTSNWSEDY. Residues histidine 362, lysine 364, and aspartate 369 contribute to the active site. An N-linked (GlcNAc...) asparagine glycan is attached at asparagine 378.

It belongs to the phospholipase D family.

It carries out the reaction a 1,2-diacyl-sn-glycero-3-phosphocholine + H2O = a 1,2-diacyl-sn-glycero-3-phosphate + choline + H(+). Its activity is regulated as follows. Inhibited by butan-1-ol. Hydrolyzes membrane phospholipids, such as PtdCho (phosphatidylcholine), producing the free headgroup and PtdOH (phosphatidic acid; signaling molecule on its own). This Dictyostelium discoideum (Social amoeba) protein is Phospholipase D Z (pldZ).